Here is a 425-residue protein sequence, read N- to C-terminus: Enolase (425 aa).

Gln161 serves as a coordination point for (2R)-2-phosphoglycerate. Catalysis depends on Glu203, which acts as the Proton donor. Mg(2+)-binding residues include Asp240, Glu283, and Asp310. The (2R)-2-phosphoglycerate site is built by Lys335, Arg364, Ser365, and Lys386. The Proton acceptor role is filled by Lys335.

It belongs to the enolase family. As to quaternary structure, component of the RNA degradosome, a multiprotein complex involved in RNA processing and mRNA degradation. Requires Mg(2+) as cofactor.

It localises to the cytoplasm. The protein localises to the secreted. It is found in the cell surface. The enzyme catalyses (2R)-2-phosphoglycerate = phosphoenolpyruvate + H2O. It functions in the pathway carbohydrate degradation; glycolysis; pyruvate from D-glyceraldehyde 3-phosphate: step 4/5. Its function is as follows. Catalyzes the reversible conversion of 2-phosphoglycerate (2-PG) into phosphoenolpyruvate (PEP). It is essential for the degradation of carbohydrates via glycolysis. This Ruthia magnifica subsp. Calyptogena magnifica protein is Enolase.